The primary structure comprises 292 residues: Universal stress protein Mb2346c (292 aa).

This sequence belongs to the universal stress protein A family.

The polypeptide is Universal stress protein Mb2346c (Mycobacterium bovis (strain ATCC BAA-935 / AF2122/97)).